A 348-amino-acid chain; its full sequence is Rhodopsin (348 aa).

The Extracellular segment spans residues 1–33; that stretch reads TEGPYFYVPMVNTTGIVRSPYEYPQYYLVNPAA. Asn-12 carries N-linked (GlcNAc...) asparagine glycosylation. Residues 34–58 traverse the membrane as a helical segment; it reads YAVLGAYMFFLIILGFPINFLTLYV. Residues 59-70 lie on the Cytoplasmic side of the membrane; it reads TLEHKKLRTPLN. Residues 71 to 93 form a helical membrane-spanning segment; the sequence is YILLNLAVADLFMVIGGFTTTMY. At 94 to 107 the chain is on the extracellular side; the sequence is SSMHGYFVLGRLGC. Cysteines 107 and 184 form a disulfide. The helical transmembrane segment at 108-130 threads the bilayer; that stretch reads NLEGFSATLGGMISLWSLAVLAI. The 'Ionic lock' involved in activated form stabilization signature appears at 131–133; the sequence is ERW. Residues 131–149 lie on the Cytoplasmic side of the membrane; sequence ERWVVVCKPISNFRFGENH. A helical transmembrane segment spans residues 150-170; it reads AIMGVSLTWTMALACTVPPLV. The Extracellular portion of the chain corresponds to 171–199; it reads GWSRYIPEGMQCSCGIDYYTRAEGFNNES. The N-linked (GlcNAc...) asparagine glycan is linked to Asn-197. A helical transmembrane segment spans residues 200 to 221; sequence FVLYMFFCHFMVPLIIIFFCYG. At 222–249 the chain is on the cytoplasmic side; the sequence is RLLCAVKEAAAAQQESETTQRAEREVTR. A helical membrane pass occupies residues 250-271; sequence MVILMVIGYLVCWLPYASVAWF. The Extracellular portion of the chain corresponds to 272–283; the sequence is IFTHQGSEFGPL. The chain crosses the membrane as a helical span at residues 284 to 305; that stretch reads FMTIPAFFAKSSSIYNPVIYIC. Position 293 is an N6-(retinylidene)lysine (Lys-293). Topologically, residues 306–348 are cytoplasmic; sequence MNKQFRNCMITTLFCGKNPFEGEEEGASSTKTEASSASSVSPA. A lipid anchor (S-palmitoyl cysteine) is attached at Cys-320. A disordered region spans residues 327-348; sequence GEEEGASSTKTEASSASSVSPA. A compositionally biased stretch (low complexity) spans 332–348; the sequence is ASSTKTEASSASSVSPA.

It belongs to the G-protein coupled receptor 1 family. Opsin subfamily. Phosphorylated on some or all of the serine and threonine residues present in the C-terminal region. In terms of processing, contains one covalently linked retinal chromophore.

It localises to the membrane. Its subcellular location is the cell projection. It is found in the cilium. The protein localises to the photoreceptor outer segment. Photoreceptor required for image-forming vision at low light intensity. While most salt water fish species use retinal as chromophore, most freshwater fish use 3-dehydroretinal, or a mixture of retinal and 3-dehydroretinal. Light-induced isomerization of 11-cis to all-trans retinal triggers a conformational change that activates signaling via G-proteins. Subsequent receptor phosphorylation mediates displacement of the bound G-protein alpha subunit by arrestin and terminates signaling. This is Rhodopsin (rho) from Neoniphon argenteus (Clearfin squirrelfish).